The primary structure comprises 478 residues: Methionine aminopeptidase 2 (478 aa).

Residues 1–122 are disordered; the sequence is MAGVEQAASF…TDPPSVPICD (122 aa). An N-acetylalanine modification is found at Ala-2. A compositionally biased stretch (basic residues) spans 36 to 46; the sequence is KKKRRKKKKGK. A Phosphoserine; alternate modification is found at Ser-60. O-linked (GlcNAc) serine; alternate glycosylation is present at Ser-60. A compositionally biased stretch (acidic residues) spans 80-92; it reads ERDDDDEDGDGDA. The segment covering 97–109 has biased composition (basic residues); sequence GKKKKKKKKKRGP. His-231 is a binding site for substrate. Asp-251, Asp-262, and His-331 together coordinate a divalent metal cation. A substrate-binding site is contributed by His-339. 2 residues coordinate a divalent metal cation: Glu-364 and Glu-459.

It belongs to the peptidase M24A family. Methionine aminopeptidase eukaryotic type 2 subfamily. In terms of assembly, binds EIF2S1 at low magnesium concentrations. Interacts strongly with the eIF-2 gamma-subunit EIF2S3. Co(2+) serves as cofactor. Requires Zn(2+) as cofactor. It depends on Mn(2+) as a cofactor. Fe(2+) is required as a cofactor. Contains approximately 12 O-linked N-acetylglucosamine (GlcNAc) residues. O-glycosylation is required for EIF2S1 binding.

Its subcellular location is the cytoplasm. It carries out the reaction Release of N-terminal amino acids, preferentially methionine, from peptides and arylamides.. Functionally, cotranslationally removes the N-terminal methionine from nascent proteins. The N-terminal methionine is often cleaved when the second residue in the primary sequence is small and uncharged (Met-Ala-, Cys, Gly, Pro, Ser, Thr, or Val). Protects eukaryotic initiation factor EIF2S1 from translation-inhibiting phosphorylation by inhibitory kinases such as EIF2AK2/PKR and EIF2AK1/HCR. Plays a critical role in the regulation of protein synthesis. This chain is Methionine aminopeptidase 2 (Metap2), found in Mus musculus (Mouse).